The chain runs to 194 residues: Molybdenum cofactor guanylyltransferase (194 aa).

GTP is bound by residues 12 to 14 (LAG), K25, N53, D71, and D101. A Mg(2+)-binding site is contributed by D101.

It belongs to the MobA family. In terms of assembly, monomer. Requires Mg(2+) as cofactor.

It is found in the cytoplasm. The enzyme catalyses Mo-molybdopterin + GTP + H(+) = Mo-molybdopterin guanine dinucleotide + diphosphate. Transfers a GMP moiety from GTP to Mo-molybdopterin (Mo-MPT) cofactor (Moco or molybdenum cofactor) to form Mo-molybdopterin guanine dinucleotide (Mo-MGD) cofactor. The polypeptide is Molybdenum cofactor guanylyltransferase (Escherichia coli O6:H1 (strain CFT073 / ATCC 700928 / UPEC)).